Reading from the N-terminus, the 105-residue chain is Large ribosomal subunit protein eL36 (105 aa).

The interval 1–20 (MAKEAPAKTGLAVGLNKGHK) is disordered.

The protein belongs to the eukaryotic ribosomal protein eL36 family.

This is Large ribosomal subunit protein eL36 (rpl36) from Trichoderma hamatum.